A 236-amino-acid chain; its full sequence is MPRTARNNNMRSNGASIEVAGVIGTGASKTRKKMRDIERLLKKDTLPAHVRVENERALKALGVELQNTQHNLKAKQNAKKYHMVRFFEKKKAIRKLKQARKTLEDTASTEVRKDIKKARKVVKHSEVDIIYVMLFPKTEKYISLYPNPKEDDKTELSKNPKAKKGMQMTEERKRELRKQAERLLDENKLPFSIDDVLQGKTIRLDDTQNHAVLTEEIDAPSKKYNDEEEKEDDFFE.

A coiled-coil region spans residues 53–110; the sequence is ENERALKALGVELQNTQHNLKAKQNAKKYHMVRFFEKKKAIRKLKQARKTLEDTASTE. Disordered regions lie at residues 146–176 and 204–236; these read PNPK…KREL and LDDT…DFFE. Positions 148–158 are enriched in basic and acidic residues; sequence PKEDDKTELSK. Positions 161–189 form a coiled coil; the sequence is KAKKGMQMTEERKRELRKQAERLLDENKL. Residues 226–236 are compositionally biased toward acidic residues; it reads DEEEKEDDFFE.

This sequence belongs to the EFG1 family.

The protein localises to the nucleus. Its subcellular location is the nucleolus. Its function is as follows. Involved in rRNA processing. The chain is rRNA-processing protein EFG1 (EFG1) from Debaryomyces hansenii (strain ATCC 36239 / CBS 767 / BCRC 21394 / JCM 1990 / NBRC 0083 / IGC 2968) (Yeast).